Consider the following 375-residue polypeptide: Growth/differentiation factor 8 (375 aa).

The first 18 residues, 1–18 (MQKLQISVYIYLFMLIVA), serve as a signal peptide directing secretion. Positions 19-266 (GPVDLNENSE…VTDTPKRSRR (248 aa)) are excised as a propeptide. Asn71 is a glycosylation site (N-linked (GlcNAc...) asparagine). Disulfide bonds link Cys272–Cys282, Cys281–Cys340, Cys309–Cys372, and Cys313–Cys374.

This sequence belongs to the TGF-beta family. In terms of assembly, homodimer; disulfide-linked. Interacts with WFIKKN2, leading to inhibit its activity. Interacts with FSTL3. In terms of processing, synthesized as large precursor molecule that undergoes proteolytic cleavage to generate an N-terminal propeptide and a disulfide linked C-terminal dimer, which is the biologically active molecule. The circulating form consists of a latent complex of the C-terminal dimer and other proteins, including its propeptide, which maintain the C-terminal dimer in a latent, inactive state. Ligand activation requires additional cleavage of the prodomain by a tolloid-like metalloproteinase.

The protein resides in the secreted. Its function is as follows. Acts specifically as a negative regulator of skeletal muscle growth. This Lepus capensis (Brown hare) protein is Growth/differentiation factor 8 (MSTN).